Consider the following 60-residue polypeptide: Homeobox protein engrailed-like (60 aa).

A DNA-binding region (homeobox) is located at residues 1-41 (GEQLCRLRAEFQASRYLTEERRTALARELRLNEAQIKIWFQ).

The protein belongs to the engrailed homeobox family.

The protein resides in the nucleus. In Lampetra planeri (Brook lamprey), this protein is Homeobox protein engrailed-like.